The chain runs to 281 residues: Large ribosomal subunit protein uL2 (281 aa).

The tract at residues 224–281 (RGSAMNPNDHPHGGGEGHQPIGRKSPMTPWGKKALGVKTRKTKKASNQFIIRRRKESK) is disordered.

This sequence belongs to the universal ribosomal protein uL2 family. Part of the 50S ribosomal subunit. Forms a bridge to the 30S subunit in the 70S ribosome.

One of the primary rRNA binding proteins. Required for association of the 30S and 50S subunits to form the 70S ribosome, for tRNA binding and peptide bond formation. It has been suggested to have peptidyltransferase activity; this is somewhat controversial. Makes several contacts with the 16S rRNA in the 70S ribosome. This is Large ribosomal subunit protein uL2 from Metamycoplasma arthritidis (strain 158L3-1) (Mycoplasma arthritidis).